A 478-amino-acid polypeptide reads, in one-letter code: Protein nucleotidyltransferase YdiU (478 aa).

Positions 84, 86, 87, 107, 119, 120, 170, and 177 each coordinate ATP. Asp-246 (proton acceptor) is an active-site residue. Residues Asn-247 and Asp-256 each coordinate Mg(2+). Asp-256 is an ATP binding site.

The protein belongs to the SELO family. Mg(2+) is required as a cofactor. It depends on Mn(2+) as a cofactor.

It catalyses the reaction L-seryl-[protein] + ATP = 3-O-(5'-adenylyl)-L-seryl-[protein] + diphosphate. The enzyme catalyses L-threonyl-[protein] + ATP = 3-O-(5'-adenylyl)-L-threonyl-[protein] + diphosphate. The catalysed reaction is L-tyrosyl-[protein] + ATP = O-(5'-adenylyl)-L-tyrosyl-[protein] + diphosphate. It carries out the reaction L-histidyl-[protein] + UTP = N(tele)-(5'-uridylyl)-L-histidyl-[protein] + diphosphate. It catalyses the reaction L-seryl-[protein] + UTP = O-(5'-uridylyl)-L-seryl-[protein] + diphosphate. The enzyme catalyses L-tyrosyl-[protein] + UTP = O-(5'-uridylyl)-L-tyrosyl-[protein] + diphosphate. Its function is as follows. Nucleotidyltransferase involved in the post-translational modification of proteins. It can catalyze the addition of adenosine monophosphate (AMP) or uridine monophosphate (UMP) to a protein, resulting in modifications known as AMPylation and UMPylation. The sequence is that of Protein nucleotidyltransferase YdiU from Escherichia coli O127:H6 (strain E2348/69 / EPEC).